The following is a 428-amino-acid chain: MKTFIALLALLTVVSAEVHQFNIGYRPNMRQRMNAKGKLAEYEKERNELLSKKSLQLASSSSPVIDYEDMAYMVQISLGSPAQNFVLFIDSGSSNLWVPDITCAGGKDATCGSYCKSTPYDACLTFCQEECCTKTVEGVKVLSTTDACQSKHRFNSSLSSSYVTNGQKFDMTYNTGEVKGFFGVDTFCFTNTSVCATGQVFGQATTIGEAFAKQPEDGIIGLGWPALAVNQQTPPLFNLMNQGKLDQPYFVVYLANIGPTSQINGGAFTVGGLDTTHCSSNVDWVPLSTQTFWQFKLGGVSSGSYSQAPNSGWQAAADTAASFIGAPKSVVTSLAKAVGATYVPLTGAFFMDCDAVVPDIVFTINGKTYNMPSTSFVVSAGPGPCMFAFYELTAGGFYPAWMLGPPFMRAYCHVHDMKSGRLGLAKVL.

The first 16 residues, 1–16 (MKTFIALLALLTVVSA), serve as a signal peptide directing secretion. The Peptidase A1 domain maps to 72–425 (YMVQISLGSP…DMKSGRLGLA (354 aa)). Asp90 is an active-site residue. Residues Asn155 and Asn191 are each glycosylated (N-linked (GlcNAc...) asparagine). Asp318 is a catalytic residue. An intrachain disulfide couples Cys353 to Cys385.

Belongs to the peptidase A1 family. Proteolytically cleaved. In terms of tissue distribution, synthesized in the intestine. When secreted in low heme conditions, localizes to neurons near the anterior and posterior regions of the body and in coelomocytes.

Its subcellular location is the secreted. Functionally, aspartic protease which plays a role in heme homeostasis and mediates inter-organ signaling between the intestine and extra-intestinal tissues when cellular heme levels are low. The polypeptide is Aspartic protease 10 (Caenorhabditis elegans).